A 534-amino-acid polypeptide reads, in one-letter code: uncharacterized protein (534 aa).

Helical transmembrane passes span 4–22, 24–46, 56–75, 82–104, and 134–156; these read ILVLLCVIALGLLVGRVSF, GISLGTSAILFVALLAGHYGWTI, ALFVYCVGISAGPTFFRGLA, AITGSVIVLTGVAVTWTSARLLG, and PAAVAVGFGVAYPIGIIAVVLFV. Residues 167–187 form a disordered region; sequence GDSDGTDSASETSGQSSAEIA. The segment covering 172–187 has biased composition (polar residues); that stretch reads TDSASETSGQSSAEIA. 2 consecutive RCK C-terminal domains span residues 180 to 264 and 265 to 349; these read GQSS…TLGE and LQDT…AVGH. A run of 6 helical transmembrane segments spans residues 359-378, 382-401, 408-430, 445-467, 479-501, and 511-533; these read LLSLVAGIVLGIFVGNLSLQ, FSMSLGIAGGPLMVGLILGH, IRGSYPPAAMLLMTEGGLALFLA, MERGAMLCVAAAAIAIIPLLVGF, WQSLGATCGGMTSTPGLAVLTGA, and YVAAYPVALVLITVAAPWLVELI.

It belongs to the AAE transporter (TC 2.A.81) family.

The protein localises to the cell membrane. This is an uncharacterized protein from Rhodopirellula baltica (strain DSM 10527 / NCIMB 13988 / SH1).